A 189-amino-acid chain; its full sequence is MPSTVAPIKGQDHFLNLVFPERVAAAYMSPLAQKYPKAALSIASLAGFLLGILKLITFPVLCAAGLFVFPIRGLISCLFHKSFQGCSGYVLATFLSLFSLALTIVGIVSCITWAPGFIFPMISVSIAFATVETCFQIYTHLFPALEHKPSSSLKIEIAAAKLPRSSSAPDLNYPSLPTQSASPSQRFSA.

A run of 4 helical transmembrane segments spans residues 49 to 69, 78 to 98, 102 to 122, and 124 to 144; these read LLGI…LFVF, LFHK…LSLF, LTIV…FPMI, and VSIA…LFPA. The interval 165–189 is disordered; it reads SSSAPDLNYPSLPTQSASPSQRFSA.

It belongs to the chlamydial CPn_0442/CT_006/TC_0274 family.

The protein localises to the cell membrane. This is an uncharacterized protein from Chlamydia trachomatis serovar D (strain ATCC VR-885 / DSM 19411 / UW-3/Cx).